A 154-amino-acid polypeptide reads, in one-letter code: Transcriptional repressor NrdR (154 aa).

The segment at 3–34 (CPFCTHPDTRVADSRLMEERNAVRRRRHCPNC) is a zinc-finger region. The 91-residue stretch at 49 to 139 (PAVIGPDKKR…LHKRFDNPAD (91 aa)) folds into the ATP-cone domain.

Belongs to the NrdR family. Zn(2+) serves as cofactor.

In terms of biological role, negatively regulates transcription of bacterial ribonucleotide reductase nrd genes and operons by binding to NrdR-boxes. The protein is Transcriptional repressor NrdR of Neisseria meningitidis serogroup A / serotype 4A (strain DSM 15465 / Z2491).